Consider the following 625-residue polypeptide: tRNA uridine 5-carboxymethylaminomethyl modification enzyme MnmG (625 aa).

FAD contacts are provided by residues 16-21 (GGGHAG), I128, and S183. 275-289 (GPRYCPSIEDKVVRF) provides a ligand contact to NAD(+). An FAD-binding site is contributed by Q372.

It belongs to the MnmG family. Homodimer. Heterotetramer of two MnmE and two MnmG subunits. It depends on FAD as a cofactor.

The protein resides in the cytoplasm. NAD-binding protein involved in the addition of a carboxymethylaminomethyl (cmnm) group at the wobble position (U34) of certain tRNAs, forming tRNA-cmnm(5)s(2)U34. This Protochlamydia amoebophila (strain UWE25) protein is tRNA uridine 5-carboxymethylaminomethyl modification enzyme MnmG.